The following is a 136-amino-acid chain: Large ribosomal subunit protein uL16c (136 aa).

This sequence belongs to the universal ribosomal protein uL16 family. In terms of assembly, part of the 50S ribosomal subunit.

It is found in the plastid. It localises to the chloroplast. In Citrus sinensis (Sweet orange), this protein is Large ribosomal subunit protein uL16c.